The chain runs to 1212 residues: DNA-directed RNA polymerase subunit beta' (1212 aa).

Zn(2+) is bound by residues Cys60, Cys62, Cys75, and Cys78. Mg(2+) is bound by residues Asp450, Asp452, and Asp454. Zn(2+)-binding residues include Cys819, Cys893, Cys900, and Cys903.

The protein belongs to the RNA polymerase beta' chain family. The RNAP catalytic core consists of 2 alpha, 1 beta, 1 beta' and 1 omega subunit. When a sigma factor is associated with the core the holoenzyme is formed, which can initiate transcription. It depends on Mg(2+) as a cofactor. Zn(2+) serves as cofactor.

It catalyses the reaction RNA(n) + a ribonucleoside 5'-triphosphate = RNA(n+1) + diphosphate. Its function is as follows. DNA-dependent RNA polymerase catalyzes the transcription of DNA into RNA using the four ribonucleoside triphosphates as substrates. The sequence is that of DNA-directed RNA polymerase subunit beta' from Streptococcus uberis (strain ATCC BAA-854 / 0140J).